Consider the following 238-residue polypeptide: Probable transcriptional regulatory protein SAB0618 (238 aa).

This sequence belongs to the TACO1 family. YeeN subfamily.

The protein localises to the cytoplasm. The chain is Probable transcriptional regulatory protein SAB0618 from Staphylococcus aureus (strain bovine RF122 / ET3-1).